We begin with the raw amino-acid sequence, 144 residues long: Urease accessory protein UreE (144 aa).

The protein belongs to the UreE family.

It localises to the cytoplasm. In terms of biological role, involved in urease metallocenter assembly. Binds nickel. Probably functions as a nickel donor during metallocenter assembly. This is Urease accessory protein UreE from Thermosynechococcus vestitus (strain NIES-2133 / IAM M-273 / BP-1).